A 137-amino-acid polypeptide reads, in one-letter code: Small ribosomal subunit protein bS6 (137 aa).

The segment at Val-96–Glu-137 is disordered. Positions Lys-104–Glu-137 are enriched in basic and acidic residues.

It belongs to the bacterial ribosomal protein bS6 family.

Binds together with bS18 to 16S ribosomal RNA. The chain is Small ribosomal subunit protein bS6 from Vibrio atlanticus (strain LGP32) (Vibrio splendidus (strain Mel32)).